A 203-amino-acid polypeptide reads, in one-letter code: Recombination protein RecR (203 aa).

The C4-type zinc finger occupies 56–71; the sequence is CAVCGNVSDNERCRIC. Residues 79–179 enclose the Toprim domain; the sequence is SVVCIVEEPK…TVTRIASGLP (101 aa).

This sequence belongs to the RecR family.

May play a role in DNA repair. It seems to be involved in an RecBC-independent recombinational process of DNA repair. It may act with RecF and RecO. This is Recombination protein RecR from Mycobacterium bovis (strain ATCC BAA-935 / AF2122/97).